The following is a 509-amino-acid chain: Cruciferin CRU1 (509 aa).

The first 23 residues, 1-23 (MVKVPHLLVATFGVLLVLNGCLA), serve as a signal peptide directing secretion. The cysteines at positions 37 and 70 are disulfide-linked. The 230-residue stretch at 42-271 (LDVLQPTETI…ALKIDVRLAQ (230 aa)) folds into the Cupin type-1 1 domain. Residues Ser53 and Ser97 each carry the phosphoserine modification. A disulfide bridge connects residues Cys113 and Cys326. Thr116 is modified (phosphothreonine). 3 disordered regions span residues 119-175 (DSQP…GFRD), 230-249 (RLAG…QQQN), and 301-321 (YESE…DNGL). Residues 124–172 (QGQQQGQPWQGQQGQQGQQGQQGQQGQQGQQGQQGQQGQQGQQGQQQQG) are compositionally biased toward low complexity. Residues 332 to 481 (ENIDDPARAD…AFQISLEEAR (150 aa)) enclose the Cupin type-1 2 domain. Phosphoserine is present on Ser352. Phosphothreonine is present on residues Thr445 and Thr487.

It belongs to the 11S seed storage protein (globulins) family. As to quaternary structure, hexamer; each subunit is composed of an acidic and a basic chain derived from a single precursor and linked by a disulfide bond.

Its function is as follows. This is a seed storage protein. In Brassica napus (Rape), this protein is Cruciferin CRU1 (CRU1).